A 264-amino-acid chain; its full sequence is Sec-independent protein translocase protein TatC (264 aa).

Transmembrane regions (helical) follow at residues 20–40 (VVVITGAVTAFLLAFHAEPAE), 85–105 (FFAQVYIAALVGVTVSTPVAV), 131–151 (AVGLFAAGCAFSYIVVIPYIL), 175–195 (FVLQFLLAFGISFQLPLVMFA), 211–231 (IRYALLGIVIFGAAITPDGSG), and 232–252 (VTMWFVAGPMIGLYFAGMFFA).

The protein belongs to the TatC family. As to quaternary structure, forms a complex with TatA.

The protein localises to the cell membrane. Its function is as follows. Part of the twin-arginine translocation (Tat) system that transports large folded proteins containing a characteristic twin-arginine motif in their signal peptide across membranes. In Cenarchaeum symbiosum (strain A), this protein is Sec-independent protein translocase protein TatC.